The chain runs to 113 residues: Nucleoid-associated protein Synpcc7942_0464 (113 aa).

This sequence belongs to the YbaB/EbfC family. Homodimer.

Its subcellular location is the cytoplasm. It is found in the nucleoid. Binds to DNA and alters its conformation. May be involved in regulation of gene expression, nucleoid organization and DNA protection. The sequence is that of Nucleoid-associated protein Synpcc7942_0464 from Synechococcus elongatus (strain ATCC 33912 / PCC 7942 / FACHB-805) (Anacystis nidulans R2).